The primary structure comprises 69 residues: Conotoxin Eb6.19 (69 aa).

The N-terminal stretch at 1–17 (VLIIAVLFLTACQLTTA) is a signal peptide. Residues 18-41 (ETYSRGRQKHRARRSTDKNSKWTR) constitute a propeptide that is removed on maturation. Intrachain disulfides connect Cys43–Cys57, Cys50–Cys61, and Cys56–Cys68.

Belongs to the conotoxin O1 superfamily. Expressed by the venom duct.

The protein resides in the secreted. The sequence is that of Conotoxin Eb6.19 (E1) from Conus ebraeus (Hebrew cone).